The following is a 115-amino-acid chain: Large ribosomal subunit protein bL19 (115 aa).

The protein belongs to the bacterial ribosomal protein bL19 family.

Its function is as follows. This protein is located at the 30S-50S ribosomal subunit interface and may play a role in the structure and function of the aminoacyl-tRNA binding site. The sequence is that of Large ribosomal subunit protein bL19 from Nitratidesulfovibrio vulgaris (strain ATCC 29579 / DSM 644 / CCUG 34227 / NCIMB 8303 / VKM B-1760 / Hildenborough) (Desulfovibrio vulgaris).